We begin with the raw amino-acid sequence, 360 residues long: MADAKAQKRQKFDNVFPKLREELLAYLNQEGMPQDAVSWFQRNLDYNVPGGKLNRGISVVDSVEILKGRKLNDDEYFKAALLGWCVEFLQAFFLVSDDMMDQSVTRRGQPCWFRVEGINLIAINDSFMLEGAIYYLLKKHFRSEPYYVHLLELFHDTTFQTEIGQLIDLITAPEDHVDLSKFSLAKHQKIVIYKTAYYSFYLPVALAMYTCGVPHAPANDPYALAQSILIPLGEYFQVQDDFLDFAAPPEVLGKVGTDIVDNKCSWCVNAALARASPAQRRVLDDNYGLKDKEAEARVKALYEELGIRDEFAAYEERAYARIVGLIETIPAEGADVGAGDVRLKREVFKAFLDKIYKRQK.

The isopentenyl diphosphate site is built by Lys-52, Arg-55, and Gln-90. Mg(2+) is bound by residues Asp-97 and Asp-101. Arg-106 is a binding site for dimethylallyl diphosphate. Arg-107 provides a ligand contact to isopentenyl diphosphate. Positions 194, 195, 237, 254, and 263 each coordinate dimethylallyl diphosphate.

This sequence belongs to the FPP/GGPP synthase family. The cofactor is Mg(2+).

The catalysed reaction is isopentenyl diphosphate + dimethylallyl diphosphate = (2E)-geranyl diphosphate + diphosphate. It carries out the reaction isopentenyl diphosphate + (2E)-geranyl diphosphate = (2E,6E)-farnesyl diphosphate + diphosphate. Its pathway is isoprenoid biosynthesis; farnesyl diphosphate biosynthesis; farnesyl diphosphate from geranyl diphosphate and isopentenyl diphosphate: step 1/1. It participates in isoprenoid biosynthesis; geranyl diphosphate biosynthesis; geranyl diphosphate from dimethylallyl diphosphate and isopentenyl diphosphate: step 1/1. Its function is as follows. Farnesyl pyrophosphate synthase; part of the second module of ergosterol biosynthesis pathway that includes the middle steps of the pathway. The second module involves the formation of farnesyl diphosphate, which is also an important intermediate in the biosynthesis of ubiquinone, dolichol, heme and prenylated proteins. This module also plays a key role in the biosynthesis of triterpenes such as ganoderic acids (GA), a group of highly oxygenated lanostane-type triterpenoids which are well recognized as a main group of unique bioactive compounds in the medicinal mushroom Ganoderma lucidum. Activity by the mevalonate kinase first converts mevalonate into 5-phosphomevalonate. 5-phosphomevalonate is then further converted to 5-diphosphomevalonate by the phosphomevalonate kinase. The diphosphomevalonate decarboxylase MVD then produces isopentenyl diphosphate. The isopentenyl-diphosphate delta-isomerase then catalyzes the 1,3-allylic rearrangement of the homoallylic substrate isopentenyl (IPP) to its highly electrophilic allylic isomer, dimethylallyl diphosphate (DMAPP). Finally the farnesyl diphosphate synthase FPS catalyzes the sequential condensation of isopentenyl pyrophosphate with dimethylallyl pyrophosphate, and then with the resultant geranylpyrophosphate to the ultimate product farnesyl pyrophosphate. The sequence is that of Farnesyl pyrophosphate synthase from Ganoderma lucidum (Ling zhi medicinal fungus).